Here is a 765-residue protein sequence, read N- to C-terminus: Putative maltooligosyl trehalose synthase (765 aa).

This sequence belongs to the glycosyl hydrolase 13 family. As to quaternary structure, monomer.

It catalyses the reaction 4-[(1-&gt;4)-alpha-D-glucosyl](n-1)-D-glucose = 1-[(1-&gt;4)-alpha-D-glucosyl](n-1)-alpha-D-glucose. Functionally, catalyzes the conversion of maltooligosaccharide into the non-reducing saccharide, maltooligosyl trehalose (alpha-maltooligosyl alpha-D-glucoside) by intramolecular transglycosylation. The protein is Putative maltooligosyl trehalose synthase (treY) of Mycobacterium tuberculosis (strain CDC 1551 / Oshkosh).